Consider the following 108-residue polypeptide: Peptidyl-prolyl cis-trans isomerase FKBP1B (108 aa).

The region spanning 20–108 (GQICVVHYTG…IFDVELLNLE (89 aa)) is the PPIase FKBP-type domain.

The protein belongs to the FKBP-type PPIase family. FKBP1 subfamily. Identified in a complex composed of RYR2, FKBP1B, PKA catalytic subunit, PRKAR2A, AKAP6, and the protein phosphatases PP2A and PP1. Interacts directly with RYR2. In terms of tissue distribution, detected in heart muscle (at protein level). Ubiquitous.

It is found in the cytoplasm. Its subcellular location is the sarcoplasmic reticulum. The enzyme catalyses [protein]-peptidylproline (omega=180) = [protein]-peptidylproline (omega=0). Its activity is regulated as follows. Inhibited by both FK506 and rapamycin. Has the potential to contribute to the immunosuppressive and toxic effects of FK506 and rapamycin. PPIases accelerate the folding of proteins. It catalyzes the cis-trans isomerization of proline imidic peptide bonds in oligopeptides. In Rattus norvegicus (Rat), this protein is Peptidyl-prolyl cis-trans isomerase FKBP1B (Fkbp1b).